A 173-amino-acid chain; its full sequence is Ribosome maturation factor RimP (173 aa).

The protein belongs to the RimP family.

The protein resides in the cytoplasm. Required for maturation of 30S ribosomal subunits. This chain is Ribosome maturation factor RimP, found in Chlorobium phaeobacteroides (strain DSM 266 / SMG 266 / 2430).